The sequence spans 230 residues: N-(5'-phosphoribosyl)anthranilate isomerase (230 aa).

The protein belongs to the TrpF family.

The enzyme catalyses N-(5-phospho-beta-D-ribosyl)anthranilate = 1-(2-carboxyphenylamino)-1-deoxy-D-ribulose 5-phosphate. The protein operates within amino-acid biosynthesis; L-tryptophan biosynthesis; L-tryptophan from chorismate: step 3/5. This Ralstonia nicotianae (strain ATCC BAA-1114 / GMI1000) (Ralstonia solanacearum) protein is N-(5'-phosphoribosyl)anthranilate isomerase.